We begin with the raw amino-acid sequence, 507 residues long: Fluoroacetaldehyde dehydrogenase (507 aa).

Residue 219–225 participates in NAD(+) binding; that stretch reads GFGIEAG. Active-site residues include E263 and C302.

Belongs to the aldehyde dehydrogenase family. In terms of assembly, homotetramer.

It carries out the reaction fluoroacetaldehyde + NAD(+) + H2O = fluoroacetate + NADH + 2 H(+). In terms of biological role, catalyzes the oxidation of fluoroacetaldehyde to fluoroacetate. Has high affinity for fluoroacetate and glycolaldehyde but not for acetaldehyde. The sequence is that of Fluoroacetaldehyde dehydrogenase from Streptantibioticus cattleyicolor (strain ATCC 35852 / DSM 46488 / JCM 4925 / NBRC 14057 / NRRL 8057) (Streptomyces cattleya).